A 288-amino-acid polypeptide reads, in one-letter code: MTMTLAVYGKGGIGKSTTSCNISVALAKRGKKVLQIGCDPKHDSTFTLTGFLIPTIIDTLQEKDFHYEDIWPEDVIYKGYGGVDCVEAGGPPAGAGCGGYVVGETVKLLKELNAFDEYDVILFDVLGDVVCGGFAAPLNYADYCLIVTDNGFDALFAANRIAASVREKARTHPLRLAGLIGNRTSKRDLIEKYVSHVPMPVLEVLPLIEDIRVSRVKGKTLFEMAEGDSMLDYVCDFYLNIADQVLAAPEGVVPSEASDRELFSLLSDYYLNPPVEKTQEDELDLMMV.

ATP-binding positions include 12 to 17 (GIGKST) and Lys-41. Ser-16 is a Mg(2+) binding site. Residues Cys-97 and Cys-131 each contribute to the [4Fe-4S] cluster site. 182–183 (NR) provides a ligand contact to ATP.

It belongs to the NifH/BchL/ChlL family. In terms of assembly, homodimer. Protochlorophyllide reductase is composed of three subunits; ChlL, ChlN and ChlB. Requires [4Fe-4S] cluster as cofactor.

It catalyses the reaction chlorophyllide a + oxidized 2[4Fe-4S]-[ferredoxin] + 2 ADP + 2 phosphate = protochlorophyllide a + reduced 2[4Fe-4S]-[ferredoxin] + 2 ATP + 2 H2O. It participates in porphyrin-containing compound metabolism; chlorophyll biosynthesis (light-independent). Its function is as follows. Component of the dark-operative protochlorophyllide reductase (DPOR) that uses Mg-ATP and reduced ferredoxin to reduce ring D of protochlorophyllide (Pchlide) to form chlorophyllide a (Chlide). This reaction is light-independent. The L component serves as a unique electron donor to the NB-component of the complex, and binds Mg-ATP. The sequence is that of Light-independent protochlorophyllide reductase iron-sulfur ATP-binding protein from Picosynechococcus sp. (strain ATCC 27264 / PCC 7002 / PR-6) (Agmenellum quadruplicatum).